Here is a 568-residue protein sequence, read N- to C-terminus: Chaperonin homolog Hsp-60, mitochondrial (568 aa).

It belongs to the chaperonin (HSP60) family.

The protein localises to the mitochondrion matrix. Implicated in mitochondrial protein import and macromolecular assembly. May facilitate the correct folding of imported proteins. May also prevent misfolding and promote the refolding and proper assembly of unfolded polypeptides generated under stress conditions in the mitochondrial matrix. This chain is Chaperonin homolog Hsp-60, mitochondrial (hsp-60), found in Caenorhabditis elegans.